The primary structure comprises 203 residues: Outer-membrane lipoprotein LolB (203 aa).

The signal sequence occupies residues Met1–Ala20. Cys21 carries the N-palmitoyl cysteine lipid modification. Cys21 is lipidated: S-diacylglycerol cysteine.

It belongs to the LolB family. As to quaternary structure, monomer.

It is found in the cell outer membrane. Its function is as follows. Plays a critical role in the incorporation of lipoproteins in the outer membrane after they are released by the LolA protein. This Cupriavidus taiwanensis (strain DSM 17343 / BCRC 17206 / CCUG 44338 / CIP 107171 / LMG 19424 / R1) (Ralstonia taiwanensis (strain LMG 19424)) protein is Outer-membrane lipoprotein LolB.